Consider the following 109-residue polypeptide: MPQFEWVHAAWLAMAIVLEIVANVFLKFSDGFRRKFYGILSLAAVLAAFSALSQAVKGIDLSVAYALWGGFGIAATLAAGWVLFGQRLNNKGWVGVVLLLIGMIMIKLA.

4 helical membrane-spanning segments follow: residues 6–26, 36–56, 64–84, and 88–108; these read WVHAAWLAMAIVLEIVANVFL, FYGILSLAAVLAAFSALSQAV, AYALWGGFGIAATLAAGWVLF, and LNNKGWVGVVLLLIGMIMIKL.

Belongs to the drug/metabolite transporter (DMT) superfamily. Small multidrug resistance (SMR) (TC 2.A.7.1) family. MdtI subfamily. In terms of assembly, forms a complex with MdtJ.

Its subcellular location is the cell inner membrane. Catalyzes the excretion of spermidine. The chain is Spermidine export protein MdtI from Citrobacter koseri (strain ATCC BAA-895 / CDC 4225-83 / SGSC4696).